The chain runs to 22 residues: Polydim-I (22 aa).

In terms of tissue distribution, expressed by the venom gland.

It is found in the secreted. Its function is as follows. Antibacterial peptide. Acts on the Mycobacterium abscessus subsp. massiliense cell wall. Reduces 40-50% of the bacterial load in macrophages infected with different M.abscessus strains. Is not cytotoxic towards mammalian cells, and shows no hemolytic activity against human erythrocytes. In vivo, reduces the bacterial load in the lungs, spleen, and liver of highly susceptible mice intravenously infected with M.abscessus. This is Polydim-I from Polybia dimorpha (Neotropical wasp).